Reading from the N-terminus, the 353-residue chain is ATP-dependent kinase YFH7 (353 aa).

Position 31–39 (31–39 (GSPGSGKST)) interacts with ATP.

Belongs to the YFH7 family.

Its function is as follows. ATP-dependent kinase that could be involved in endoplasmic reticulum membrane assembly. This is ATP-dependent kinase YFH7 (YFH7) from Saccharomyces cerevisiae (strain JAY291) (Baker's yeast).